We begin with the raw amino-acid sequence, 144 residues long: MLMPKRVKHRKVQRGRMKGKATRGNFLAYGDYGIQALTCGWITSNQIESARIAINRYIKRGGKLWIKIFPDKPVTEKPAETRMGSGKGSPEYWVAVVKPGRVLFELSGVPEETAREAMRLASHKLPVKTKFVSKRDFEEMGGEE.

It belongs to the universal ribosomal protein uL16 family. Part of the 50S ribosomal subunit.

Binds 23S rRNA and is also seen to make contacts with the A and possibly P site tRNAs. The sequence is that of Large ribosomal subunit protein uL16 from Clostridium beijerinckii (strain ATCC 51743 / NCIMB 8052) (Clostridium acetobutylicum).